Reading from the N-terminus, the 270-residue chain is Glucosamine-6-phosphate deaminase (270 aa).

Asp-68 serves as the catalytic Proton acceptor; for enolization step. Asp-145 functions as the For ring-opening step in the catalytic mechanism. The active-site Proton acceptor; for ring-opening step is His-147. Residue Glu-152 is the For ring-opening step of the active site.

This sequence belongs to the glucosamine/galactosamine-6-phosphate isomerase family. NagB subfamily.

It catalyses the reaction alpha-D-glucosamine 6-phosphate + H2O = beta-D-fructose 6-phosphate + NH4(+). The protein operates within amino-sugar metabolism; N-acetylneuraminate degradation; D-fructose 6-phosphate from N-acetylneuraminate: step 5/5. In terms of biological role, catalyzes the reversible isomerization-deamination of glucosamine 6-phosphate (GlcN6P) to form fructose 6-phosphate (Fru6P) and ammonium ion. This chain is Glucosamine-6-phosphate deaminase, found in Bifidobacterium longum (strain NCC 2705).